Here is a 422-residue protein sequence, read N- to C-terminus: Platelet-activating factor acetylhydrolase (422 aa).

Residues 1–21 (MASLWVRARRVFMKSRASGFS) form the signal peptide. The Nucleophile role is filled by Ser-266. The active-site Charge relay system is Asp-289. An N-linked (GlcNAc...) asparagine glycan is attached at Asn-331. Residue His-345 is the Charge relay system of the active site.

This sequence belongs to the AB hydrolase superfamily. Lipase family. In terms of tissue distribution, plasma.

It localises to the secreted. It is found in the extracellular space. The enzyme catalyses a 1-O-alkyl-2-acetyl-sn-glycero-3-phosphocholine + H2O = a 1-O-alkyl-sn-glycero-3-phosphocholine + acetate + H(+). Modulates the action of platelet-activating factor (PAF) by hydrolyzing the sn-2 ester bond to yield the biologically inactive lyso-PAF. Has a specificity for substrates with a short residue at the sn-2 position. It is inactive against long-chain phospholipids. The polypeptide is Platelet-activating factor acetylhydrolase (PLA2G7) (Gallus gallus (Chicken)).